We begin with the raw amino-acid sequence, 692 residues long: Vacuolar amino acid transporter 3 (692 aa).

The segment covering methionine 1–glutamine 14 has biased composition (polar residues). The segment at methionine 1 to leucine 71 is disordered. The span at serine 15–glycine 24 shows a compositional bias: low complexity. The segment covering glycine 28–threonine 38 has biased composition (polar residues). 3 positions are modified to phosphoserine: serine 59, serine 119, and serine 121. Disordered stretches follow at residues lysine 135–lysine 170 and aspartate 258–proline 294. Residues proline 141 to proline 153 are compositionally biased toward low complexity. The span at alanine 154–serine 167 shows a compositional bias: polar residues. Serine 165 carries the post-translational modification Phosphoserine. The segment covering aspartate 258–glutamate 279 has biased composition (acidic residues). 11 helical membrane-spanning segments follow: residues alanine 302 to phenylalanine 322, phenylalanine 329 to isoleucine 349, phenylalanine 374 to phenylalanine 394, glycine 412 to leucine 432, alanine 443 to tyrosine 463, tryptophan 483 to isoleucine 503, alanine 519 to phenylalanine 539, valine 561 to isoleucine 581, tyrosine 607 to leucine 627, phenylalanine 630 to leucine 650, and leucine 665 to glutamine 685.

It belongs to the amino acid/polyamine transporter 2 family.

It localises to the vacuole membrane. Involved in amino acid efflux from the vacuole to the cytoplasm. Capable of transporting large neutral amino acids including tyrosine, glutamine, asparagine, isoleucine and leucine. This Saccharomyces cerevisiae (strain ATCC 204508 / S288c) (Baker's yeast) protein is Vacuolar amino acid transporter 3 (AVT3).